Here is a 526-residue protein sequence, read N- to C-terminus: Protein translocase subunit SecD (526 aa).

The next 6 helical transmembrane spans lie at 8–28 (LIVF…SLLE), 356–376 (IIAL…YYSM), 379–399 (VIAC…MAIF), 405–425 (LPGM…NIII), 453–473 (AIFD…AYGT), and 478–498 (GFAL…IIGT).

This sequence belongs to the SecD/SecF family. SecD subfamily. Forms a complex with SecF. Part of the essential Sec protein translocation apparatus which comprises SecA, SecYEG and auxiliary proteins SecDF-YajC and YidC.

Its subcellular location is the cell inner membrane. Part of the Sec protein translocase complex. Interacts with the SecYEG preprotein conducting channel. SecDF uses the proton motive force (PMF) to complete protein translocation after the ATP-dependent function of SecA. The polypeptide is Protein translocase subunit SecD (Helicobacter pylori (strain J99 / ATCC 700824) (Campylobacter pylori J99)).